A 399-amino-acid polypeptide reads, in one-letter code: MKLTDLPDSRGHFGPYGGIFVSETLMAALDALRVEYDAACRDPGFMAEFEYELKHYVGRPSPVYHARRLSEEYGGAQIYLKREDLNHTGAHKINNTIGQALLARRMGKKRVIAETGAGQHGVASATVAARYGMECVVYMGAEDVARQAPNVFRMKLLGATVVPVSSGSKTLKDALNEAMRDWVTNVESTFYILGTAAGPHPYPMLVRDFQCVIGRECIAQMPELVGRQPDAVVACVGGGSNAIGIFHPYIPHENVRLIGVEAGGSGVASGKHAAPLTAGTPGVLHGFRSYLMQDENGQIIETHSVSAGLDYPGVGPEHSYLKDAGRAEYVPINDDEALAAFHDLCRFEGIIPALESSHAVAQAKKLAPTMKKDQVILVNLSGRGDKDINTVAKAAGITL.

The residue at position 92 (Lys-92) is an N6-(pyridoxal phosphate)lysine.

It belongs to the TrpB family. As to quaternary structure, tetramer of two alpha and two beta chains. Pyridoxal 5'-phosphate serves as cofactor.

The enzyme catalyses (1S,2R)-1-C-(indol-3-yl)glycerol 3-phosphate + L-serine = D-glyceraldehyde 3-phosphate + L-tryptophan + H2O. The protein operates within amino-acid biosynthesis; L-tryptophan biosynthesis; L-tryptophan from chorismate: step 5/5. Functionally, the beta subunit is responsible for the synthesis of L-tryptophan from indole and L-serine. The sequence is that of Tryptophan synthase beta chain from Thiobacillus denitrificans (strain ATCC 25259 / T1).